Here is a 301-residue protein sequence, read N- to C-terminus: Ribosome-inactivating protein (301 aa).

The propeptide at 1–16 (MAEITLEPSDLMAQTN) is or 12 (in 10% of the molecules). Residues 162–186 (MATLEEEEVKMQMQMPEAADLAAAA) constitute a propeptide that is removed on maturation. The active site involves glutamate 207. Residues 258-301 (VIPDMQKLGIKDKNEAARIVALVKNQTTAAAATAASADNDDDEA) constitute a propeptide that is removed on maturation.

Belongs to the ribosome-inactivating protein family. Type 1 RIP subfamily. In terms of assembly, synthesized and stored in the kernel as a 34 kDa inactive precursor. During germination, this neutral precursor is converted into a basic, active form by limited proteolysis, which removes 25 AA of net charge -6 from the center of the polypeptide chain. Additional processing also occurs at the N- and C-termini of the polypeptide. A two-chain active RIP (comprised of 16.5 and 8.5 kDa fragments that remain tightly associated) is produced from this processing event.

The catalysed reaction is Endohydrolysis of the N-glycosidic bond at one specific adenosine on the 28S rRNA.. In terms of biological role, potent catalytic inactivator of eukaryotic protein synthesis. It may be a component of natural defense mechanisms involved in protecting the kernel against soil-borne fungal infections. In Zea mays (Maize), this protein is Ribosome-inactivating protein.